A 584-amino-acid chain; its full sequence is uncharacterized protein (584 aa).

An N-terminal signal peptide occupies residues Met1–Ser27. The N-palmitoyl cysteine moiety is linked to residue Cys28. Cys28 is lipidated: S-diacylglycerol cysteine. Residues Asn530 to Ala570 form a disordered region. Low complexity predominate over residues Thr538–Thr552. The span at Asp553–Asn565 shows a compositional bias: basic and acidic residues.

This sequence belongs to the MG067/MG068/MG395 family.

It localises to the cell membrane. This is an uncharacterized protein from Mycoplasmoides gallisepticum (strain R(low / passage 15 / clone 2)) (Mycoplasma gallisepticum).